A 116-amino-acid polypeptide reads, in one-letter code: MKMKLLGIILLVSFPFVLGFAGIPIEEGENSVEVGEVERSCINVGDFCDGKKDDCQCCRDNAFCSCSVIFGYKTNCRCEVGTTATSYGICMAKHKCGRQTTCTKPCLSKRCKKNHG.

A signal peptide spans 1–19; sequence MKMKLLGIILLVSFPFVLG. The propeptide occupies 20-38; sequence FAGIPIEEGENSVEVGEVE. Cystine bridges form between cysteine 41-cysteine 58, cysteine 48-cysteine 64, cysteine 55-cysteine 90, cysteine 57-cysteine 78, cysteine 66-cysteine 76, cysteine 96-cysteine 102, and cysteine 106-cysteine 111. Histidine 115 bears the Histidine amide mark.

This sequence belongs to the neurotoxin 04 (omega-agtx) family. 03 (type II/III omega-agtx) subfamily. As to expression, expressed by the venom gland.

It is found in the secreted. In terms of biological role, this toxin is a potent and practically irreversible antagonist of both Cav2.1/CACNA1A and Cav2.2/CACNA1B calcium channels, while it displays a partial and rapidly reversible block of Cav2.3/CACNA1E calcium channels and no effect on Cav3/CACNA1 calcium channels. Inhibits glutamate uptake from rat brain synaptosomes by an interaction between cysteines from both glutamate transporter and toxin. Blocks potassium-induced exocytosis of synaptic vesicles in brain cortical synaptosomes (IC(50)=1.1 nM). In rat brain, inhibits glutamate release, neuronal death and loss of neurotransmission in the hippocampus resulting from ischemia. In vivo, induces rapid general flaccid paralysis followed by death in 10-30 minutes at dose levels of 5 ug per mouse. This is Omega-ctenitoxin-Pn3a from Phoneutria nigriventer (Brazilian armed spider).